The sequence spans 300 residues: Ribonuclease HIII (300 aa).

The RNase H type-2 domain occupies 86 to 300 (RPRLGVDESG…FNEICDSASA (215 aa)). The a divalent metal cation site is built by Asp92, Glu93, and Asp196.

The protein belongs to the RNase HII family. RnhC subfamily. Mn(2+) serves as cofactor. The cofactor is Mg(2+).

It is found in the cytoplasm. It carries out the reaction Endonucleolytic cleavage to 5'-phosphomonoester.. In terms of biological role, endonuclease that specifically degrades the RNA of RNA-DNA hybrids. The protein is Ribonuclease HIII of Chlamydia felis (strain Fe/C-56) (Chlamydophila felis).